Here is a 542-residue protein sequence, read N- to C-terminus: Keratin, type II cytoskeletal 75 (542 aa).

The span at 1-26 shows a compositional bias: polar residues; sequence MSRQSTVTFHSGSRRGFSTASATTPT. Residues 1 to 44 are disordered; the sequence is MSRQSTVTFHSGSRRGFSTASATTPTAGRSRFSSVSVARSSGNS. A head region spans residues 1 to 139; that stretch reads MSRQSTVTFH…DPTIQRVRKE (139 aa). A compositionally biased stretch (low complexity) spans 27-42; the sequence is AGRSRFSSVSVARSSG. The tract at residues 140 to 175 is coil 1A; sequence EREQIKTLNNKFASFIDKVRFLEQQNKVLETKWNLL. Positions 140 to 453 constitute an IF rod domain; sequence EREQIKTLNN…KLLEGEECRL (314 aa). The segment at 176–194 is linker 1; sequence QEQGSRTVRQNLEPFFDAY. Residues 195-287 are coil 1B; sequence VNDLRRQLDS…VYEAELSQMQ (93 aa). The interval 288–310 is linker 12; sequence NQVSDTSVVLSMDNNRSLDLDSI. The tract at residues 311–449 is coil 2; the sequence is IAEVKAQYED…ATYRKLLEGE (139 aa). Residues 450 to 542 are tail; the sequence is ECRLSGEGVS…TSSSRKSYKH (93 aa). Residues 514–542 form a disordered region; it reads TSSSRGPVGSGSSIKFVSSTSSSRKSYKH.

The protein belongs to the intermediate filament family. Heterodimer of a type I and a type II keratin. May associate with KRT17.

Plays a central role in hair and nail formation. Essential component of keratin intermediate filaments in the companion layer of the hair follicle. This Rattus norvegicus (Rat) protein is Keratin, type II cytoskeletal 75 (Krt75).